A 231-amino-acid polypeptide reads, in one-letter code: Platelet-activating factor acetylhydrolase IB subunit alpha1 (231 aa).

At Ser2 the chain carries N-acetylserine. Ser2 is modified (phosphoserine). Catalysis depends on residues Ser47, Asp192, and His195.

Belongs to the 'GDSL' lipolytic enzyme family. Platelet-activating factor acetylhydrolase IB beta/gamma subunits subfamily. As to quaternary structure, forms a catalytic dimer which is either homodimer (alpha1/alpha1 homodimer) or heterodimer with PAFAH1B2 (alpha1/alpha2 heterodimer). Component of the cytosolic (PAF-AH (I)) heterotetrameric enzyme, which is composed of PAFAH1B1 (beta), PAFAH1B2 (alpha2) and PAFAH1B3 (alpha1) subunits. The catalytic activity of the enzyme resides in the alpha1 (PAFAH1B3) and alpha2 (PAFAH1B2) subunits, whereas the beta subunit (PAFAH1B1) has regulatory activity. Trimer formation is not essential for the catalytic activity. Interacts with VLDLR; this interaction may modulate the Reelin pathway.

The protein resides in the cytoplasm. It carries out the reaction a 1-O-alkyl-2-acetyl-sn-glycero-3-phosphocholine + H2O = a 1-O-alkyl-sn-glycero-3-phosphocholine + acetate + H(+). The catalysed reaction is 1-O-hexadecyl-2-acetyl-sn-glycero-3-phosphocholine + H2O = 1-O-hexadecyl-sn-glycero-3-phosphocholine + acetate + H(+). It catalyses the reaction 1-O-hexadecyl-2-acetyl-sn-glycero-3-phosphate + H2O = 1-O-hexadecyl-sn-glycero-3-phosphate + acetate + H(+). Its activity is regulated as follows. Beta subunit (PAFAH1B1) inhibits the acetylhydrolase activity of the alpha1/alpha1 catalytic homodimer. Alpha1 catalytic subunit of the cytosolic type I platelet-activating factor (PAF) acetylhydrolase (PAF-AH (I)) heterotetrameric enzyme that catalyzes the hydrolyze of the acetyl group at the sn-2 position of PAF and its analogs and modulates the action of PAF. The activity and substrate specificity of PAF-AH (I) are affected by its subunit composition. Both alpha1/alpha1 homodimer (PAFAH1B3/PAFAH1B3 homodimer) and alpha1/alpha2 heterodimer(PAFAH1B3/PAFAH1B2 heterodimer) hydrolyze 1-O-alkyl-2-acetyl-sn-glycero-3-phosphoric acid (AAGPA) more efficiently than PAF, but they have little hydrolytic activity towards 1-O-alkyl-2-acetyl-sn-glycero-3-phosphorylethanolamine (AAGPE). Plays an important role during the development of brain. This Pongo abelii (Sumatran orangutan) protein is Platelet-activating factor acetylhydrolase IB subunit alpha1.